Reading from the N-terminus, the 427-residue chain is MERELGMYGNDRSRSRSPVRRRLSDDRDRYDDYNDSSSNNGNGSRRQRRDRGSRFNDRYDQSYGGSRYHDDRNWPPRRGGRGRGGSRSFRGGRGGGRGRTLGPIVERDLERQFDATKRNFENSIFVRNLTFDCTPEDLKELFGTVGEVVEADIITSKGHHRGMGTVEFTKNESVQDAISKFDGALFMDRKLMVRQDNPPPEAAKEFSKKATREEIDNGFEVFIINLPYSMNWQSLKDMFKECGHVLRADVELDFNGFSRGFGSVIYPTEDEMIRAIDTFNGMEVEGRVLEVREGRFNKRKNNDRYNQRREDLEDTRGTEPGLAQDAAVHIDETAAKFTEGVNPGGDRNCFIYCSNLPFSTARSDLFDLFGPIGKINNAELKPQENGQPTGVAVVEYENLVDADFCIQKLNNYNYGGCSLQISYARRD.

A disordered region spans residues 1–101 (MERELGMYGN…GRGGGRGRTL (101 aa)). The span at 22-32 (RLSDDRDRYDD) shows a compositional bias: basic and acidic residues. Residue serine 24 is modified to Phosphoserine. Residues 35-44 (DSSSNNGNGS) show a composition bias toward low complexity. Basic and acidic residues predominate over residues 50–60 (DRGSRFNDRYD). 2 RRM domains span residues 122–198 (NSIF…QDNP) and 219–296 (FEVF…EGRF). Phosphothreonine is present on threonine 130. Residues 300-317 (KNNDRYNQRREDLEDTRG) show a composition bias toward basic and acidic residues. The segment at 300-319 (KNNDRYNQRREDLEDTRGTE) is disordered. The RRM 3 domain maps to 349–426 (CFIYCSNLPF…CSLQISYARR (78 aa)).

Post-translationally, methylated by HMT1.

It is found in the cytoplasm. The protein localises to the nucleus. Its subcellular location is the chromosome. It localises to the telomere. The protein resides in the P-body. It is found in the stress granule. Its function is as follows. Binds to intron-containing transcripts and is involved in quality control for the export of spliced mRNAs from the nucleus. Binds to pre-mRNAs until splicing is completed or until faulty mRNAs are degraded. On correctly spliced mRNAs, GBP2 and HRB1 recruit MEX67 to allow nuclear export. On faulty mRNAs, GBP2 and HRB1 associate with the TRAMP complex that guides those pre-mRNAs to the exosome for degradation. Binds single-stranded telomeric sequences of the type (TG[1-3])n in vitro. Influences the localization of RAP1 in the nuclei. Involved in modulating telomere length. This Saccharomyces cerevisiae (strain ATCC 204508 / S288c) (Baker's yeast) protein is Serine/arginine (SR)-type shuttling mRNA binding protein GBP2.